Reading from the N-terminus, the 935-residue chain is C-1-tetrahydrofolate synthase, cytoplasmic (935 aa).

An N-acetylmethionine modification is found at Met1. A methylenetetrahydrofolate dehydrogenase and methenyltetrahydrofolate cyclohydrolase (D/C) domain region spans residues 2 to 291 (APAGILNGKL…MLMQSTVESA (290 aa)). Substrate contacts are provided by residues 52 to 56 (YINVK) and 99 to 101 (VQL). Residue Lys56 is part of the active site. Residues 172–174 (GRS) and Ser197 each bind NADP(+). 272–276 (PGGVG) is a binding site for substrate. Positions 310–935 (LNLKTPVPSD…PETEQVNGLF (626 aa)) are formyltetrahydrofolate synthetase domain. A Phosphoserine modification is found at Ser318. An ATP-binding site is contributed by 380-387 (TPLGEGKS). A phosphoserine mark is found at Ser413 and Ser490.

This sequence in the N-terminal section; belongs to the tetrahydrofolate dehydrogenase/cyclohydrolase family. It in the C-terminal section; belongs to the formate--tetrahydrofolate ligase family. Homodimer.

Its subcellular location is the cytoplasm. The enzyme catalyses (6R)-5,10-methylene-5,6,7,8-tetrahydrofolate + NADP(+) = (6R)-5,10-methenyltetrahydrofolate + NADPH. It catalyses the reaction (6R)-5,10-methenyltetrahydrofolate + H2O = (6R)-10-formyltetrahydrofolate + H(+). It carries out the reaction (6S)-5,6,7,8-tetrahydrofolate + formate + ATP = (6R)-10-formyltetrahydrofolate + ADP + phosphate. The protein operates within one-carbon metabolism; tetrahydrofolate interconversion. In terms of biological role, trifunctional enzyme that catalyzes the interconversion of three forms of one-carbon-substituted tetrahydrofolate: (6R)-5,10-methylene-5,6,7,8-tetrahydrofolate, 5,10-methenyltetrahydrofolate and (6S)-10-formyltetrahydrofolate. These derivatives of tetrahydrofolate are differentially required in nucleotide and amino acid biosynthesis, (6S)-10-formyltetrahydrofolate being required for purine biosynthesis while (6R)-5,10-methylene-5,6,7,8-tetrahydrofolate is used for serine and methionine biosynthesis for instance. The chain is C-1-tetrahydrofolate synthase, cytoplasmic (Mthfd1) from Mus musculus (Mouse).